The primary structure comprises 445 residues: Na(+)-translocating NADH-quinone reductase subunit A (445 aa).

The protein belongs to the NqrA family. As to quaternary structure, composed of six subunits; NqrA, NqrB, NqrC, NqrD, NqrE and NqrF.

The catalysed reaction is a ubiquinone + n Na(+)(in) + NADH + H(+) = a ubiquinol + n Na(+)(out) + NAD(+). NQR complex catalyzes the reduction of ubiquinone-1 to ubiquinol by two successive reactions, coupled with the transport of Na(+) ions from the cytoplasm to the periplasm. NqrA to NqrE are probably involved in the second step, the conversion of ubisemiquinone to ubiquinol. The protein is Na(+)-translocating NADH-quinone reductase subunit A of Pseudomonas aeruginosa (strain UCBPP-PA14).